The following is a 303-amino-acid chain: Acetaldehyde dehydrogenase 2 (303 aa).

Cys130 acts as the Acyl-thioester intermediate in catalysis. Residues Ser161–Asn169 and Asn272 each bind NAD(+).

This sequence belongs to the acetaldehyde dehydrogenase family.

It catalyses the reaction acetaldehyde + NAD(+) + CoA = acetyl-CoA + NADH + H(+). This chain is Acetaldehyde dehydrogenase 2, found in Burkholderia vietnamiensis (strain G4 / LMG 22486) (Burkholderia cepacia (strain R1808)).